Here is a 226-residue protein sequence, read N- to C-terminus: Thioredoxin domain-containing protein 9 (226 aa).

The Thioredoxin domain maps to 52 to 180 (LEALKKAQQQ…TTETLEWRLG (129 aa)). Phosphoserine is present on residues Ser-188, Ser-221, and Ser-223.

As to quaternary structure, forms ternary complexes with the chaperonin TCP1 complex, spanning the cylindrical chaperonin cavity and contacting at least 2 subunits.

It localises to the cytoplasm. The protein resides in the nucleus. It is found in the cytoskeleton. The protein localises to the microtubule organizing center. Its subcellular location is the centrosome. It localises to the midbody. In terms of biological role, significantly diminishes the chaperonin TCP1 complex ATPase activity, thus negatively impacts protein folding, including that of actin or tubulin. In Bos taurus (Bovine), this protein is Thioredoxin domain-containing protein 9 (TXNDC9).